The sequence spans 231 residues: Probable septum site-determining protein MinC (231 aa).

The protein belongs to the MinC family. In terms of assembly, interacts with MinD and FtsZ.

In terms of biological role, cell division inhibitor that blocks the formation of polar Z ring septums. Rapidly oscillates between the poles of the cell to destabilize FtsZ filaments that have formed before they mature into polar Z rings. Prevents FtsZ polymerization. In Bradyrhizobium diazoefficiens (strain JCM 10833 / BCRC 13528 / IAM 13628 / NBRC 14792 / USDA 110), this protein is Probable septum site-determining protein MinC.